The primary structure comprises 1159 residues: ATP-dependent helicase/deoxyribonuclease subunit B (1159 aa).

Residue 8 to 15 participates in ATP binding; the sequence is GRAGSGKT. [4Fe-4S] cluster is bound by residues C784, C1102, C1105, and C1111. The tract at residues 1140–1159 is disordered; it reads VKEDGSQVDGRTEGSDNNEG.

This sequence belongs to the helicase family. AddB/RexB type 1 subfamily. As to quaternary structure, heterodimer of AddA and AddB. Mg(2+) serves as cofactor. Requires [4Fe-4S] cluster as cofactor.

In terms of biological role, the heterodimer acts as both an ATP-dependent DNA helicase and an ATP-dependent, dual-direction single-stranded exonuclease. Recognizes the chi site generating a DNA molecule suitable for the initiation of homologous recombination. The AddB subunit has 5' -&gt; 3' nuclease activity but not helicase activity. In Caldanaerobacter subterraneus subsp. tengcongensis (strain DSM 15242 / JCM 11007 / NBRC 100824 / MB4) (Thermoanaerobacter tengcongensis), this protein is ATP-dependent helicase/deoxyribonuclease subunit B.